The following is a 227-amino-acid chain: PKHD-type hydroxylase Patl_2273 (227 aa).

One can recognise a Fe2OG dioxygenase domain in the interval 78–178 (KIYPPKFNRY…RTASFFWIES (101 aa)). His-96, Asp-98, and His-159 together coordinate Fe cation. Residue Arg-169 coordinates 2-oxoglutarate.

Fe(2+) is required as a cofactor. Requires L-ascorbate as cofactor.

The protein is PKHD-type hydroxylase Patl_2273 of Pseudoalteromonas atlantica (strain T6c / ATCC BAA-1087).